Reading from the N-terminus, the 153-residue chain is Endoribonuclease YbeY (153 aa).

Residues histidine 114, histidine 118, and histidine 124 each coordinate Zn(2+).

It belongs to the endoribonuclease YbeY family. Zn(2+) is required as a cofactor.

The protein localises to the cytoplasm. Its function is as follows. Single strand-specific metallo-endoribonuclease involved in late-stage 70S ribosome quality control and in maturation of the 3' terminus of the 16S rRNA. The protein is Endoribonuclease YbeY of Finegoldia magna (strain ATCC 29328 / DSM 20472 / WAL 2508) (Peptostreptococcus magnus).